The chain runs to 3032 residues: DmX-like protein 2 (3032 aa).

WD repeat units follow at residues 108-145 (FLSS…ILEE), 167-207 (KTSV…KSSI), and 230-278 (AHPR…EDCL). S326 is subject to Phosphoserine. Positions 418–486 (QLDHESDDAD…HPRPSISMPL (69 aa)) are disordered. Residues 422-434 (ESDDADREDEERS) are compositionally biased toward acidic residues. Positions 435 to 474 (QDERERGLRMKLDHELSLDRESEAGTGSSEHEDGEREGSP) are enriched in basic and acidic residues. A Phosphoserine modification is found at S473. The WD 4 repeat unit spans residues 492–532 (DRKIETLLTEWNKNPDMLFTIHPVDGTFLVWHVKYLDEYNP). The interval 577 to 598 (PSQQEMMSVDSPHGSQLHSPSH) is disordered. S587 carries the post-translational modification Phosphoserine. The segment covering 589–598 (HGSQLHSPSH) has biased composition (polar residues). 3 WD repeats span residues 594-633 (HSPS…KSAF), 750-802 (LHTS…RKLL), and 879-921 (QPSQ…VQAC). The segment at 937-958 (VPGQKNLDSSPETSSSMSSVPH) is disordered. Phosphoserine occurs at positions 945 and 946. Residues 945–958 (SSPETSSSMSSVPH) are compositionally biased toward low complexity. One copy of the WD 8 repeat lies at 1001-1038 (LSSSSIYPVCLAPYLVVTTCSDNKVRFWKCCMETNSLG). Phosphoserine is present on residues S1141, S1144, and S1152. WD repeat units follow at residues 1164–1205 (PNIK…VSDQ) and 1245–1285 (GTPS…GNVD). 2 positions are modified to phosphoserine: S1288 and S1399. T1416 is modified (phosphothreonine). The disordered stretch occupies residues 1443-1464 (RISEDSTKKPQSYEDHIESQSE). The span at 1444-1461 (ISEDSTKKPQSYEDHIES) shows a compositional bias: basic and acidic residues. At S1856 the chain carries Phosphoserine. Positions 1922–1953 (QLDSVSGRMENGPSESKPVSRSDGGSGADWSA) are disordered. T2017 is subject to Phosphothreonine. A coiled-coil region spans residues 2117–2146 (GSYERHQIERRRLQAKREHAERRKLWLQKN). Phosphoserine is present on residues S2394 and S2636. Over residues 2722 to 2732 (QPGAASHSSSQ) the composition is skewed to low complexity. Positions 2722–2744 (QPGAASHSSSQPHPPPSLPWLGS) are disordered. 6 WD repeats span residues 2757-2796 (RNLH…QLVC), 2800-2839 (AGNA…SNPK), 2846-2888 (CHSK…GNSL), 2894-2933 (CHDH…LIHT), 2936-2975 (AHDS…LIHS), and 2988-3026 (NIGA…NIPN).

Interacts with MADD and RAB3GAP. In terms of tissue distribution, expressed in the brain and pituitary gland. Detected in the hippocampus, dentate gyrus, hypothalamus, pyriform cortex and the granular and molecular layers of the cerebellum of adult animals. In the hypothalamus, expression is observed in the arcuate nucleus, the ME, the organum vasculosum of the lamina terminalis, and the subfornical organ, the subcommissural organ, and the suprachiasmatic nucleus. Both tanycytes and hypothalamic neurosecretory neurons express the protein. Expressed in the inner and outer hair cells as well as in the spiral ganglion neurons. Expressed in insulin-secreting cells of the islets of Langerhans in the pancreas.

It localises to the cytoplasmic vesicle. It is found in the secretory vesicle. Its subcellular location is the synaptic vesicle membrane. The protein resides in the neuronal dense core vesicle. Its function is as follows. May serve as a scaffold protein for MADD and RAB3GA on synaptic vesicles of neuronal and endocrine homeostatic processes. Plays a role in the brain as a key controller of neuronal and endocrine homeostatic processes. The polypeptide is DmX-like protein 2 (Dmxl2) (Mus musculus (Mouse)).